The chain runs to 443 residues: ATP-dependent protease ATPase subunit HslU (443 aa).

Residues I18, 60–65 (GVGKTE), D256, E321, and R393 each bind ATP.

This sequence belongs to the ClpX chaperone family. HslU subfamily. In terms of assembly, a double ring-shaped homohexamer of HslV is capped on each side by a ring-shaped HslU homohexamer. The assembly of the HslU/HslV complex is dependent on binding of ATP.

The protein localises to the cytoplasm. Functionally, ATPase subunit of a proteasome-like degradation complex; this subunit has chaperone activity. The binding of ATP and its subsequent hydrolysis by HslU are essential for unfolding of protein substrates subsequently hydrolyzed by HslV. HslU recognizes the N-terminal part of its protein substrates and unfolds these before they are guided to HslV for hydrolysis. This chain is ATP-dependent protease ATPase subunit HslU, found in Buchnera aphidicola subsp. Schizaphis graminum (strain Sg).